The following is an 84-amino-acid chain: Large ribosomal subunit protein uL23 (84 aa).

It belongs to the universal ribosomal protein uL23 family. In terms of assembly, part of the 50S ribosomal subunit. Contacts protein L29.

In terms of biological role, binds to 23S rRNA. One of the proteins that surrounds the polypeptide exit tunnel on the outside of the ribosome. The protein is Large ribosomal subunit protein uL23 of Haloquadratum walsbyi (strain DSM 16790 / HBSQ001).